Here is a 165-residue protein sequence, read N- to C-terminus: Phosphopantetheine adenylyltransferase (165 aa).

Ser-9 lines the substrate pocket. ATP-binding positions include 9-10 (SF) and His-17. Substrate is bound by residues Lys-41, Ile-75, and Arg-89. ATP is bound by residues 90 to 92 (GVR), Glu-100, and 125 to 131 (YLFVRSD).

Belongs to the bacterial CoaD family. In terms of assembly, homohexamer. Requires Mg(2+) as cofactor.

It localises to the cytoplasm. It catalyses the reaction (R)-4'-phosphopantetheine + ATP + H(+) = 3'-dephospho-CoA + diphosphate. It functions in the pathway cofactor biosynthesis; coenzyme A biosynthesis; CoA from (R)-pantothenate: step 4/5. In terms of biological role, reversibly transfers an adenylyl group from ATP to 4'-phosphopantetheine, yielding dephospho-CoA (dPCoA) and pyrophosphate. The protein is Phosphopantetheine adenylyltransferase of Borrelia duttonii (strain Ly).